Reading from the N-terminus, the 255-residue chain is Thiazole synthase (255 aa).

The Schiff-base intermediate with DXP role is filled by lysine 96. 1-deoxy-D-xylulose 5-phosphate-binding positions include glycine 157, alanine 184–glycine 185, and asparagine 206–threonine 207.

The protein belongs to the ThiG family. As to quaternary structure, homotetramer. Forms heterodimers with either ThiH or ThiS.

The protein localises to the cytoplasm. It catalyses the reaction [ThiS sulfur-carrier protein]-C-terminal-Gly-aminoethanethioate + 2-iminoacetate + 1-deoxy-D-xylulose 5-phosphate = [ThiS sulfur-carrier protein]-C-terminal Gly-Gly + 2-[(2R,5Z)-2-carboxy-4-methylthiazol-5(2H)-ylidene]ethyl phosphate + 2 H2O + H(+). It participates in cofactor biosynthesis; thiamine diphosphate biosynthesis. Catalyzes the rearrangement of 1-deoxy-D-xylulose 5-phosphate (DXP) to produce the thiazole phosphate moiety of thiamine. Sulfur is provided by the thiocarboxylate moiety of the carrier protein ThiS. In vitro, sulfur can be provided by H(2)S. This chain is Thiazole synthase, found in Clostridium acetobutylicum (strain ATCC 824 / DSM 792 / JCM 1419 / IAM 19013 / LMG 5710 / NBRC 13948 / NRRL B-527 / VKM B-1787 / 2291 / W).